A 405-amino-acid chain; its full sequence is L-rhamnonate dehydratase (405 aa).

Substrate-binding residues include His33 and Arg59. Mg(2+)-binding residues include Asp226, Glu252, and Glu280. His329 serves as the catalytic Proton acceptor. Glu349 is a substrate binding site.

The protein belongs to the mandelate racemase/muconate lactonizing enzyme family. RhamD subfamily. Homooctamer; tetramer of dimers. It depends on Mg(2+) as a cofactor.

It catalyses the reaction L-rhamnonate = 2-dehydro-3-deoxy-L-rhamnonate + H2O. Its function is as follows. Catalyzes the dehydration of L-rhamnonate to 2-keto-3-deoxy-L-rhamnonate (KDR). The polypeptide is L-rhamnonate dehydratase (Salmonella paratyphi A (strain AKU_12601)).